We begin with the raw amino-acid sequence, 626 residues long: Phosphomethylpyrimidine synthase (626 aa).

The interval 1–22 (MTKQEKAINLSESAQVDQQSVQ) is disordered. Polar residues predominate over residues 10-22 (LSESAQVDQQSVQ). Substrate is bound by residues Asn232, Met261, Tyr290, His326, 346-348 (SRG), 387-390 (DGLR), and Glu426. Position 430 (His430) interacts with Zn(2+). Tyr453 provides a ligand contact to substrate. His494 is a Zn(2+) binding site. The [4Fe-4S] cluster site is built by Cys574, Cys577, and Cys582.

It belongs to the ThiC family. In terms of assembly, homodimer. It depends on [4Fe-4S] cluster as a cofactor.

It catalyses the reaction 5-amino-1-(5-phospho-beta-D-ribosyl)imidazole + S-adenosyl-L-methionine = 4-amino-2-methyl-5-(phosphooxymethyl)pyrimidine + CO + 5'-deoxyadenosine + formate + L-methionine + 3 H(+). The protein operates within cofactor biosynthesis; thiamine diphosphate biosynthesis. Its function is as follows. Catalyzes the synthesis of the hydroxymethylpyrimidine phosphate (HMP-P) moiety of thiamine from aminoimidazole ribotide (AIR) in a radical S-adenosyl-L-methionine (SAM)-dependent reaction. In Pseudomonas putida (strain GB-1), this protein is Phosphomethylpyrimidine synthase.